Consider the following 151-residue polypeptide: Ubiquitin-conjugating enzyme E2 2 (151 aa).

The 147-residue stretch at 4–150 (AARRRLMRDF…VRETVERSWE (147 aa)) folds into the UBC core domain. Cysteine 88 acts as the Glycyl thioester intermediate in catalysis.

Belongs to the ubiquitin-conjugating enzyme family.

Its subcellular location is the cytoplasm. The protein localises to the nucleus. The catalysed reaction is S-ubiquitinyl-[E1 ubiquitin-activating enzyme]-L-cysteine + [E2 ubiquitin-conjugating enzyme]-L-cysteine = [E1 ubiquitin-activating enzyme]-L-cysteine + S-ubiquitinyl-[E2 ubiquitin-conjugating enzyme]-L-cysteine.. It participates in protein modification; protein ubiquitination. Catalyzes the covalent attachment of ubiquitin to other proteins. Plays a role in transcription regulation by catalyzing the monoubiquitination of histone H2B to form H2BK123ub1. H2BK123ub1 gives a specific tag for epigenetic transcriptional activation and is also a prerequisite for H3K4me and H3K79me formation. Also involved in postreplication repair of UV-damaged DNA, in N-end rule-dependent protein degradation and in sporulation. This is Ubiquitin-conjugating enzyme E2 2 (UBC2) from Trichoderma harzianum (Hypocrea lixii).